Here is a 382-residue protein sequence, read N- to C-terminus: Na(+)/H(+) antiporter NhaA 1 (382 aa).

Transmembrane regions (helical) follow at residues 10 to 30 (EFSI…NISP), 45 to 65 (FSFH…IAAA), 87 to 107 (LLAT…LNAL), 116 to 136 (GWGI…SLVF), 145 to 165 (FLLL…ALFY), 170 to 190 (LPAA…AALL), 211 to 231 (AGLF…VPFL), 252 to 272 (LASF…LFGL), 275 to 295 (AGVT…SLVI), 326 to 346 (LVGL…GEAF), and 353 to 373 (GAAK…LAAG).

This sequence belongs to the NhaA Na(+)/H(+) (TC 2.A.33) antiporter family.

The protein localises to the cell inner membrane. It carries out the reaction Na(+)(in) + 2 H(+)(out) = Na(+)(out) + 2 H(+)(in). In terms of biological role, na(+)/H(+) antiporter that extrudes sodium in exchange for external protons. The sequence is that of Na(+)/H(+) antiporter NhaA 1 from Pelobacter propionicus (strain DSM 2379 / NBRC 103807 / OttBd1).